The following is a 563-amino-acid chain: Arginine--tRNA ligase (563 aa).

Residues 121 to 131 (PNIAKPFSIGH) carry the 'HIGH' region motif.

Belongs to the class-I aminoacyl-tRNA synthetase family. In terms of assembly, monomer.

It localises to the cytoplasm. It carries out the reaction tRNA(Arg) + L-arginine + ATP = L-arginyl-tRNA(Arg) + AMP + diphosphate. In Streptococcus thermophilus (strain CNRZ 1066), this protein is Arginine--tRNA ligase.